A 71-amino-acid polypeptide reads, in one-letter code: Large ribosomal subunit protein bL31 (71 aa).

Residues C16, C18, C36, and C39 each coordinate Zn(2+).

Belongs to the bacterial ribosomal protein bL31 family. Type A subfamily. Part of the 50S ribosomal subunit. Zn(2+) is required as a cofactor.

Functionally, binds the 23S rRNA. The chain is Large ribosomal subunit protein bL31 from Syntrophus aciditrophicus (strain SB).